Reading from the N-terminus, the 488-residue chain is Glutamyl-tRNA(Gln) amidotransferase subunit A (488 aa).

Residues lysine 76 and serine 152 each act as charge relay system in the active site. Serine 176 serves as the catalytic Acyl-ester intermediate.

It belongs to the amidase family. GatA subfamily. Heterotrimer of A, B and C subunits.

The catalysed reaction is L-glutamyl-tRNA(Gln) + L-glutamine + ATP + H2O = L-glutaminyl-tRNA(Gln) + L-glutamate + ADP + phosphate + H(+). Functionally, allows the formation of correctly charged Gln-tRNA(Gln) through the transamidation of misacylated Glu-tRNA(Gln) in organisms which lack glutaminyl-tRNA synthetase. The reaction takes place in the presence of glutamine and ATP through an activated gamma-phospho-Glu-tRNA(Gln). The polypeptide is Glutamyl-tRNA(Gln) amidotransferase subunit A (Oceanobacillus iheyensis (strain DSM 14371 / CIP 107618 / JCM 11309 / KCTC 3954 / HTE831)).